A 90-amino-acid chain; its full sequence is DNA-directed RNA polymerase subunit omega (90 aa).

The interval 69–90 is disordered; the sequence is RQEQQEQEAAELAAVSSIARNR.

It belongs to the RNA polymerase subunit omega family. In terms of assembly, the RNAP catalytic core consists of 2 alpha, 1 beta, 1 beta' and 1 omega subunit. When a sigma factor is associated with the core the holoenzyme is formed, which can initiate transcription.

The catalysed reaction is RNA(n) + a ribonucleoside 5'-triphosphate = RNA(n+1) + diphosphate. Functionally, promotes RNA polymerase assembly. Latches the N- and C-terminal regions of the beta' subunit thereby facilitating its interaction with the beta and alpha subunits. The protein is DNA-directed RNA polymerase subunit omega of Vibrio vulnificus (strain CMCP6).